A 200-amino-acid chain; its full sequence is Large ribosomal subunit protein uL13 (200 aa).

This sequence belongs to the universal ribosomal protein uL13 family. Component of the large ribosomal subunit. Mature ribosomes consist of a small (40S) and a large (60S) subunit. The 40S subunit contains about 32 different proteins and 1 molecule of RNA (18S). The 60S subunit contains 45 different proteins and 3 molecules of RNA (25S, 5.8S and 5S).

Its subcellular location is the cytoplasm. Its function is as follows. Component of the ribosome, a large ribonucleoprotein complex responsible for the synthesis of proteins in the cell. The small ribosomal subunit (SSU) binds messenger RNAs (mRNAs) and translates the encoded message by selecting cognate aminoacyl-transfer RNA (tRNA) molecules. The large subunit (LSU) contains the ribosomal catalytic site termed the peptidyl transferase center (PTC), which catalyzes the formation of peptide bonds, thereby polymerizing the amino acids delivered by tRNAs into a polypeptide chain. The nascent polypeptides leave the ribosome through a tunnel in the LSU and interact with protein factors that function in enzymatic processing, targeting, and the membrane insertion of nascent chains at the exit of the ribosomal tunnel. The polypeptide is Large ribosomal subunit protein uL13 (Candida albicans (strain SC5314 / ATCC MYA-2876) (Yeast)).